A 167-amino-acid polypeptide reads, in one-letter code: 2-C-methyl-D-erythritol 2,4-cyclodiphosphate synthase (167 aa).

2 residues coordinate a divalent metal cation: Asp-15 and His-17. 4-CDP-2-C-methyl-D-erythritol 2-phosphate-binding positions include 15-17 and 43-44; these read DIH and HS. Position 51 (His-51) interacts with a divalent metal cation. 4-CDP-2-C-methyl-D-erythritol 2-phosphate-binding positions include 65–67, 141–144, and Arg-151; these read DIG and TTNE.

This sequence belongs to the IspF family. Homotrimer. A divalent metal cation serves as cofactor.

The catalysed reaction is 4-CDP-2-C-methyl-D-erythritol 2-phosphate = 2-C-methyl-D-erythritol 2,4-cyclic diphosphate + CMP. It participates in isoprenoid biosynthesis; isopentenyl diphosphate biosynthesis via DXP pathway; isopentenyl diphosphate from 1-deoxy-D-xylulose 5-phosphate: step 4/6. Its function is as follows. Involved in the biosynthesis of isopentenyl diphosphate (IPP) and dimethylallyl diphosphate (DMAPP), two major building blocks of isoprenoid compounds. Catalyzes the conversion of 4-diphosphocytidyl-2-C-methyl-D-erythritol 2-phosphate (CDP-ME2P) to 2-C-methyl-D-erythritol 2,4-cyclodiphosphate (ME-CPP) with a corresponding release of cytidine 5-monophosphate (CMP). In Prochlorococcus marinus (strain MIT 9312), this protein is 2-C-methyl-D-erythritol 2,4-cyclodiphosphate synthase.